Here is a 34-residue protein sequence, read N- to C-terminus: Aspartate aminotransferase 2 (34 aa).

Belongs to the class-I pyridoxal-phosphate-dependent aminotransferase family. Homodimer. It depends on pyridoxal 5'-phosphate as a cofactor.

It carries out the reaction L-aspartate + 2-oxoglutarate = oxaloacetate + L-glutamate. Its function is as follows. Important for the metabolism of amino acids and Krebs-cycle related organic acids. In plants, it is involved in nitrogen metabolism and in aspects of carbon and energy metabolism. The chain is Aspartate aminotransferase 2 from Pseudotsuga menziesii (Douglas-fir).